The chain runs to 172 residues: R-phycocyanin beta subunit (172 aa).

Residue asparagine 72 is modified to N4-methylasparagine. Cysteine 82 is a (2R,3E)-phycocyanobilin binding site. Position 153 (cysteine 153) interacts with (2R,3E)-phycoerythrobilin.

The protein belongs to the phycobiliprotein family. As to quaternary structure, heterodimer of an alpha and a beta subunit, which further assembles into trimers and the trimers into hexamers. Contains two covalently linked bilin chromophores.

Its subcellular location is the cellular thylakoid membrane. In terms of biological role, light-harvesting photosynthetic bile pigment-protein from the phycobiliprotein complex (phycobilisome, PBS). Phycocyanin is the major phycobiliprotein in the PBS rod. In Synechococcus sp. (strain WH7803), this protein is R-phycocyanin beta subunit (rpcB).